A 427-amino-acid polypeptide reads, in one-letter code: Glutamate-1-semialdehyde 2,1-aminomutase (427 aa).

Residue lysine 265 is modified to N6-(pyridoxal phosphate)lysine.

It belongs to the class-III pyridoxal-phosphate-dependent aminotransferase family. HemL subfamily. Homodimer. Pyridoxal 5'-phosphate serves as cofactor.

The protein resides in the cytoplasm. It catalyses the reaction (S)-4-amino-5-oxopentanoate = 5-aminolevulinate. The protein operates within porphyrin-containing compound metabolism; protoporphyrin-IX biosynthesis; 5-aminolevulinate from L-glutamyl-tRNA(Glu): step 2/2. This is Glutamate-1-semialdehyde 2,1-aminomutase from Teredinibacter turnerae (strain ATCC 39867 / T7901).